Consider the following 699-residue polypeptide: Polyribonucleotide nucleotidyltransferase (699 aa).

Residues Asp485 and Asp491 each coordinate Mg(2+). The KH domain maps to Pro552–Ile611. One can recognise an S1 motif domain in the interval Gly621–Lys689.

Belongs to the polyribonucleotide nucleotidyltransferase family. As to quaternary structure, component of the RNA degradosome, which is a multiprotein complex involved in RNA processing and mRNA degradation. It depends on Mg(2+) as a cofactor.

It localises to the cytoplasm. It carries out the reaction RNA(n+1) + phosphate = RNA(n) + a ribonucleoside 5'-diphosphate. Involved in mRNA degradation. Catalyzes the phosphorolysis of single-stranded polyribonucleotides processively in the 3'- to 5'-direction. The polypeptide is Polyribonucleotide nucleotidyltransferase (Shewanella baltica (strain OS223)).